The sequence spans 251 residues: Phosphosulfolactate synthase (251 aa).

The protein belongs to the phosphosulfolactate synthase family. Homotrimer. Requires Mg(2+) as cofactor.

The enzyme catalyses (2R)-O-phospho-3-sulfolactate = phosphoenolpyruvate + sulfite + H(+). Its pathway is cofactor biosynthesis; coenzyme M biosynthesis; sulfoacetaldehyde from phosphoenolpyruvate and sulfite: step 1/4. Catalyzes the addition of sulfite to phosphoenolpyruvate (PEP) to yield (2R)-phospho-3-sulfolactate (PSL). The chain is Phosphosulfolactate synthase (comA) from Methanocaldococcus jannaschii (strain ATCC 43067 / DSM 2661 / JAL-1 / JCM 10045 / NBRC 100440) (Methanococcus jannaschii).